Reading from the N-terminus, the 365-residue chain is Coxsackievirus and adenovirus receptor homolog (365 aa).

The N-terminal stretch at 1-19 is a signal peptide; the sequence is MELLLRFLLLCGVADFTRG. Ig-like C2-type domains follow at residues 20 to 136 and 141 to 228; these read LSIT…IQLT and PSGI…LRLD. Residues 20-238 lie on the Extracellular side of the membrane; the sequence is LSITTPEQMI…VVPPSNRAGT (219 aa). Intrachain disulfides connect Cys41/Cys120, Cys146/Cys223, and Cys162/Cys212. Asn106 carries an N-linked (GlcNAc...) asparagine glycan. A helical transmembrane segment spans residues 239 to 259; the sequence is IAGAVIGTLLALVLIALIVFC. Residues Cys259 and Cys260 are each lipidated (S-palmitoyl cysteine). Residues 260 to 365 are Cytoplasmic-facing; that stretch reads CHKKRREEKY…PAQSKDGSIV (106 aa). The span at 269–282 shows a compositional bias: basic and acidic residues; that stretch reads YEKEVHHDIREDVP. Residues 269–343 are disordered; sequence YEKEVHHDIR…TLPPAKVAAP (75 aa). Positions 286–322 are enriched in polar residues; it reads SRTSTARSYIGSNHSSLGSMSPSNMEGYSKTQYNQVP. Residues Ser297, Ser304, Ser306, Ser323, Ser332, and Ser363 each carry the phosphoserine modification. Positions 360–365 match the PDZ-binding motif; the sequence is KDGSIV.

Monomer. May form homodimers. Interacts with LNX, MAGI1, DLG4, PRKCABP, TJP1 and CTNNB1. Interacts with MPDZ; recruits MPDZ to intercellular contact sites. Interacts with JAML (homodimeric form). Post-translationally, N-glycosylated. Palmitoylated on Cys-259 and/or Cys-260; required for proper localization to the plasma membrane.

It localises to the cell membrane. It is found in the basolateral cell membrane. Its subcellular location is the cell junction. The protein localises to the tight junction. The protein resides in the adherens junction. Functionally, component of the epithelial apical junction complex that may function as a homophilic cell adhesion molecule and is essential for tight junction integrity. Also involved in transepithelial migration of leukocytes through adhesive interactions with JAML a transmembrane protein of the plasma membrane of leukocytes. The interaction between both receptors also mediates the activation of gamma-delta T-cells, a subpopulation of T-cells residing in epithelia and involved in tissue homeostasis and repair. Upon epithelial CXADR-binding, JAML induces downstream cell signaling events in gamma-delta T-cells through PI3-kinase and MAP kinases. It results in proliferation and production of cytokines and growth factors by T-cells that in turn stimulate epithelial tissues repair. The protein is Coxsackievirus and adenovirus receptor homolog (CXADR) of Bos taurus (Bovine).